A 95-amino-acid chain; its full sequence is Co-chaperonin GroES (95 aa).

It belongs to the GroES chaperonin family. Heptamer of 7 subunits arranged in a ring. Interacts with the chaperonin GroEL.

It is found in the cytoplasm. Together with the chaperonin GroEL, plays an essential role in assisting protein folding. The GroEL-GroES system forms a nano-cage that allows encapsulation of the non-native substrate proteins and provides a physical environment optimized to promote and accelerate protein folding. GroES binds to the apical surface of the GroEL ring, thereby capping the opening of the GroEL channel. This is Co-chaperonin GroES from Zymomonas mobilis subsp. mobilis (strain ATCC 31821 / ZM4 / CP4).